Reading from the N-terminus, the 327-residue chain is Tryptophan--tRNA ligase (327 aa).

ATP is bound by residues 9 to 11 (QPS) and 17 to 18 (GN). Positions 10–18 (PSGDIHIGN) match the 'HIGH' region motif. Asp-132 serves as a coordination point for L-tryptophan. ATP is bound by residues 144-146 (GED), Ile-183, and 192-196 (KMSKS). Residues 192-196 (KMSKS) carry the 'KMSKS' region motif.

Belongs to the class-I aminoacyl-tRNA synthetase family. Homodimer.

It localises to the cytoplasm. It catalyses the reaction tRNA(Trp) + L-tryptophan + ATP = L-tryptophyl-tRNA(Trp) + AMP + diphosphate + H(+). Its function is as follows. Catalyzes the attachment of tryptophan to tRNA(Trp). The polypeptide is Tryptophan--tRNA ligase (Caldanaerobacter subterraneus subsp. tengcongensis (strain DSM 15242 / JCM 11007 / NBRC 100824 / MB4) (Thermoanaerobacter tengcongensis)).